The primary structure comprises 616 residues: Sulfite reductase [NADPH] hemoprotein beta-component (616 aa).

Residues 1 to 10 (MDDHSPRDAA) are compositionally biased toward basic and acidic residues. A disordered region spans residues 1-35 (MDDHSPRDAAETPAPGPAATPAKRVYETPPTSRPI). Low complexity predominate over residues 11 to 22 (ETPAPGPAATPA). The [4Fe-4S] cluster site is built by C470, C476, C515, and C519. C519 serves as a coordination point for siroheme.

The protein belongs to the nitrite and sulfite reductase 4Fe-4S domain family. Alpha(8)-beta(8). The alpha component is a flavoprotein, the beta component is a hemoprotein. It depends on siroheme as a cofactor. The cofactor is [4Fe-4S] cluster.

The catalysed reaction is hydrogen sulfide + 3 NADP(+) + 3 H2O = sulfite + 3 NADPH + 4 H(+). The protein operates within sulfur metabolism; hydrogen sulfide biosynthesis; hydrogen sulfide from sulfite (NADPH route): step 1/1. In terms of biological role, component of the sulfite reductase complex that catalyzes the 6-electron reduction of sulfite to sulfide. This is one of several activities required for the biosynthesis of L-cysteine from sulfate. The sequence is that of Sulfite reductase [NADPH] hemoprotein beta-component from Methylobacterium radiotolerans (strain ATCC 27329 / DSM 1819 / JCM 2831 / NBRC 15690 / NCIMB 10815 / 0-1).